The sequence spans 158 residues: Transcription elongation factor GreA (158 aa).

Belongs to the GreA/GreB family.

Its function is as follows. Necessary for efficient RNA polymerase transcription elongation past template-encoded arresting sites. The arresting sites in DNA have the property of trapping a certain fraction of elongating RNA polymerases that pass through, resulting in locked ternary complexes. Cleavage of the nascent transcript by cleavage factors such as GreA or GreB allows the resumption of elongation from the new 3'terminus. GreA releases sequences of 2 to 3 nucleotides. The sequence is that of Transcription elongation factor GreA from Allorhizobium ampelinum (strain ATCC BAA-846 / DSM 112012 / S4) (Agrobacterium vitis (strain S4)).